Here is a 442-residue protein sequence, read N- to C-terminus: Pentatricopeptide repeat-containing protein At2g27800, mitochondrial (442 aa).

A mitochondrion-targeting transit peptide spans 1–67 (MSATRSTFLG…SFLPSIHVRF (67 aa)). PPR repeat units lie at residues 206–236 (NENLYNSIIFYFTKAGKLIRAVNIFRHMVTS), 244–286 (TIRT…GIEP), 287–322 (DVFALNCLVKGYVLSLHVNDALRIFHQMSVVYDCEP), 323–357 (NSFTYDYLIHGLCAQGRTINARELLSEMKGKGFVP), 358–392 (NGKSYNSLVNAFALSGEIDDAVKCLWEMIENGRVV), and 393–427 (DFISYRTLVDESCRKGKYDEATRLLEMLREKQLVD).

The protein belongs to the PPR family. P subfamily.

It localises to the mitochondrion. The polypeptide is Pentatricopeptide repeat-containing protein At2g27800, mitochondrial (Arabidopsis thaliana (Mouse-ear cress)).